The chain runs to 826 residues: Eukaryotic translation initiation factor 3 subunit C (826 aa).

Disordered regions lie at residues 1–71 and 205–227; these read MSRF…GKGA and SGGD…PRAK. A compositionally biased stretch (acidic residues) spans 10-20; the sequence is DSDDSSSDEDL. A compositionally biased stretch (low complexity) spans 21–30; it reads YGSGSESGSD. The span at 32–65 shows a compositional bias: acidic residues; the sequence is SQDEQDGGDDNDDDMSDDSMFADDSDDDSDDDED. Residues 218-227 are compositionally biased toward basic and acidic residues; sequence KEDKPKPRAK. A PCI domain is found at 605–779; it reads FHTHINLELL…NSVVFTQAVQ (175 aa).

This sequence belongs to the eIF-3 subunit C family. Component of the eukaryotic translation initiation factor 3 (eIF-3) complex.

The protein resides in the cytoplasm. Component of the eukaryotic translation initiation factor 3 (eIF-3) complex, which is involved in protein synthesis of a specialized repertoire of mRNAs and, together with other initiation factors, stimulates binding of mRNA and methionyl-tRNAi to the 40S ribosome. The eIF-3 complex specifically targets and initiates translation of a subset of mRNAs involved in cell proliferation. This is Eukaryotic translation initiation factor 3 subunit C from Yarrowia lipolytica (strain CLIB 122 / E 150) (Yeast).